A 103-amino-acid polypeptide reads, in one-letter code: Small ribosomal subunit protein uS10 (103 aa).

The protein belongs to the universal ribosomal protein uS10 family. As to quaternary structure, part of the 30S ribosomal subunit.

Its function is as follows. Involved in the binding of tRNA to the ribosomes. The chain is Small ribosomal subunit protein uS10 from Mycoplasmopsis pulmonis (strain UAB CTIP) (Mycoplasma pulmonis).